Here is a 773-residue protein sequence, read N- to C-terminus: Disintegrin and metalloproteinase domain-containing protein 11 (773 aa).

An N-terminal signal peptide occupies residues 1–24 (MRRLRRWAIAALLLLPLLPPPGLG). Residues 25-229 (ALGPRGALHW…PNWPKLRRKR (205 aa)) constitute a propeptide that is removed on maturation. The disordered stretch occupies residues 36 to 82 (SSAHVGSPESPEGSEVTEPSRLVRQSSGGEVRKPQLDTRVRQDPPRG). A compositionally biased stretch (basic and acidic residues) spans 65–79 (EVRKPQLDTRVRQDP). N-linked (GlcNAc...) asparagine glycans are attached at residues asparagine 100 and asparagine 167. The Extracellular portion of the chain corresponds to 230-738 (QVRRGHPTVH…ERYKGPSGTN (509 aa)). The 200-residue stretch at 243 to 442 (KYVELIVIND…GGGSCLFNKP (200 aa)) folds into the Peptidase M12B domain. The required for localization to cerebellar cortex basket cell terminals. Also required for localization of KCNA1, KCNA2, DLG4 and ADAM22 to cerebellar cortex basket cell terminal perisomatic axons and pinceaux stretch occupies residues 336–773 (GRTFQSTSSG…NIRRGRSGGA (438 aa)). Intrachain disulfides connect cysteine 353/cysteine 437, cysteine 396/cysteine 421, cysteine 398/cysteine 405, and cysteine 507/cysteine 527. The Disintegrin domain maps to 448-535 (PPECGNGFVE…QCPPNLHKLD (88 aa)). Residues asparagine 609 and asparagine 677 are each glycosylated (N-linked (GlcNAc...) asparagine). 3 cysteine pairs are disulfide-bonded: cysteine 681/cysteine 696, cysteine 690/cysteine 702, and cysteine 704/cysteine 713. In terms of domain architecture, EGF-like spans 681 to 713 (CPGSGERRICSHHGVCSNEGKCICQPDWTGKDC). A helical transmembrane segment spans residues 739 to 759 (IIIGSIAGAVLVAAIVLGGTG). Residues 760–773 (WGFKNIRRGRSGGA) lie on the Cytoplasmic side of the membrane.

As to quaternary structure, interacts with LGI1 and LGI4. Interacts with KCNA1/KV1.1, KCNA2/KV1.2, DLG4/PSD-95 and ADAM22. Post-translationally, the precursor is cleaved by a furin endopeptidase. As to expression, abundantly expressed in cerebellar cortex basket cell terminals and pinceaux, weakly expressed in Purkinje cells (at protein level). Weakly expressed in the heart. Abundantly in expressed in neurons throughout the central nervous system including the telencephalon, diencephalic and brainstem nuclei, cerebellum and spinal cord. Expressed in the peripheral nervous system trigeminal and dorsal root ganglia. Expressed in the ganglion and bipolar cells of the retinae and weakly in the cornea of the eyes. Expressed in the hepatocytes of the parenchyma and hepatic lobules of the liver. Expressed in distinct focal areas in the juxtamedullary cortex of the kidney. Expressed in spermatocytes in the seminiferous tubules of the testes. Expressed in the stratum spinosum of the stratified squamous epithelia of the tongue and esophagus.

The protein resides in the presynaptic cell membrane. Its subcellular location is the perikaryon. The protein localises to the cell projection. It localises to the axon. Functionally, probable ligand for integrin in the brain. This is a non catalytic metalloprotease-like protein. Required for localization of the potassium channel subunit proteins KCNA1/KV1.1 and KCNA2/KV1.2 at cerebellar cortex basket cell distal terminals, is thereby involved in ephaptic inhibitory synchronization of Purkinje cell firing and response to stress. Plays a role in spatial learning and motor coordination. Involved in the nociceptive pain response to chemical-derived stimulation. The protein is Disintegrin and metalloproteinase domain-containing protein 11 (Adam11) of Mus musculus (Mouse).